A 312-amino-acid chain; its full sequence is DNA-directed RNA polymerase subunit alpha (312 aa).

An alpha N-terminal domain (alpha-NTD) region spans residues 1 to 226 (MIEFEKPNIT…EHLDLFTDLT (226 aa)). The tract at residues 244 to 312 (DHVLERTIEE…DLGLGLKNDK (69 aa)) is alpha C-terminal domain (alpha-CTD).

The protein belongs to the RNA polymerase alpha chain family. As to quaternary structure, homodimer. The RNAP catalytic core consists of 2 alpha, 1 beta, 1 beta' and 1 omega subunit. When a sigma factor is associated with the core the holoenzyme is formed, which can initiate transcription.

The catalysed reaction is RNA(n) + a ribonucleoside 5'-triphosphate = RNA(n+1) + diphosphate. DNA-dependent RNA polymerase catalyzes the transcription of DNA into RNA using the four ribonucleoside triphosphates as substrates. This Streptococcus gordonii (strain Challis / ATCC 35105 / BCRC 15272 / CH1 / DL1 / V288) protein is DNA-directed RNA polymerase subunit alpha.